We begin with the raw amino-acid sequence, 230 residues long: Ribosome-recycling factor, mitochondrial (230 aa).

The transit peptide at 1–24 directs the protein to the mitochondrion; sequence MILTTARLNCRPVTVPRLFNRSFS.

The protein belongs to the RRF family.

It is found in the mitochondrion. Functionally, necessary for protein synthesis in mitochondria. Functions as a ribosome recycling factor in mitochondria. In Saccharomyces cerevisiae (strain ATCC 204508 / S288c) (Baker's yeast), this protein is Ribosome-recycling factor, mitochondrial (RRF1).